A 1473-amino-acid polypeptide reads, in one-letter code: DNA topoisomerase 2 (1473 aa).

Residues 1-20 (MATKLPLQNSNAANVAKAPA) form a disordered region. The segment covering 9–20 (NSNAANVAKAPA) has biased composition (low complexity). ATP-binding positions include asparagine 91, asparagine 120, 148–150 (SSN), and 161–168 (GRNGYGAK). The interval 345-347 (NKK) is interaction with DNA. ATP is bound at residue 378-380 (QTK). In terms of domain architecture, Toprim spans 455 to 569 (CTLILTEGDS…SLLQVPSFLV (115 aa)). Mg(2+) is bound by residues glutamate 461, aspartate 538, and aspartate 540. A Topo IIA-type catalytic domain is found at 704–1163 (IPSMVDGLKP…TPKSLWLSDL (460 aa)). The active-site O-(5'-phospho-DNA)-tyrosine intermediate is the tyrosine 794. The interval 980-989 (KLTTTIATSN) is interaction with DNA. 3 disordered regions span residues 1195-1230 (SGAA…SYSA), 1242-1297 (KPKA…EVEE), and 1313-1473 (GSAP…EDDE). Composition is skewed to basic residues over residues 1200–1216 (KVKR…KTTK) and 1278–1288 (PKGRQGAKKKA). Over residues 1351–1360 (KPAATKAAKP) the composition is skewed to low complexity. Composition is skewed to polar residues over residues 1394 to 1404 (SPFNKKSSSVM) and 1417 to 1427 (ENVAGNSSSEK). Acidic residues predominate over residues 1453 to 1473 (SESESANDSEFDDIEDDEDDE).

It belongs to the type II topoisomerase family. In terms of assembly, homodimer. Mg(2+) is required as a cofactor. It depends on Mn(2+) as a cofactor. The cofactor is Ca(2+).

The enzyme catalyses ATP-dependent breakage, passage and rejoining of double-stranded DNA.. Functionally, control of topological states of DNA by transient breakage and subsequent rejoining of DNA strands. Topoisomerase II makes double-strand breaks. The sequence is that of DNA topoisomerase 2 (TOP2) from Arabidopsis thaliana (Mouse-ear cress).